The following is a 298-amino-acid chain: Mitochondrial dicarboxylate transporter (298 aa).

3 Solcar repeats span residues 11–95 (KNIK…LKEN), 103–195 (TNMA…FKNY), and 205–289 (SKNY…LKKH). The next 6 membrane-spanning stretches (helical) occupy residues 17–37 (WWYGGAAGIFATMVTHPLDLA), 58–76 (ILANEGVVGLYSGLSAAVL), 105–126 (MAYLLPCSMFSGAIGGLAGNFA), 170–189 (GWKPNMVRGILMTASQVVTY), 211–231 (LTASLLAGLVATTVCSPADVM), and 265–283 (WLPSFTRLGPFTMLIFFAI).

It belongs to the mitochondrial carrier (TC 2.A.29) family. As to quaternary structure, homodimer. Binds to the TIM22 translocation complex during import.

It is found in the mitochondrion inner membrane. In terms of biological role, mitochondrial dicarboxylic transporter catalyzing the exchange of dicarboxylic acids like malate and succinate for inorganic phosphate. Required for growth on ethanol and acetate. The chain is Mitochondrial dicarboxylate transporter (DIC1) from Saccharomyces cerevisiae (strain ATCC 204508 / S288c) (Baker's yeast).